The sequence spans 143 residues: uncharacterized protein (143 aa).

Residues 5–137 enclose the HTH marR-type domain; the sequence is DARLASDLSL…LRNAADLILE (133 aa). Residues 51 to 74 constitute a DNA-binding region (H-T-H motif); the sequence is PGALAIRERVRPPSMTRVIASLAD.

Homodimer.

This is an uncharacterized protein from Mycobacterium leprae (strain TN).